A 341-amino-acid chain; its full sequence is tRNA N6-adenosine threonylcarbamoyltransferase (341 aa).

H111 and H115 together coordinate Fe cation. Substrate is bound by residues 134 to 138 (LVSGG), D167, G180, and N276. Residue D304 participates in Fe cation binding.

It belongs to the KAE1 / TsaD family. Fe(2+) serves as cofactor.

It localises to the cytoplasm. It catalyses the reaction L-threonylcarbamoyladenylate + adenosine(37) in tRNA = N(6)-L-threonylcarbamoyladenosine(37) in tRNA + AMP + H(+). In terms of biological role, required for the formation of a threonylcarbamoyl group on adenosine at position 37 (t(6)A37) in tRNAs that read codons beginning with adenine. Is involved in the transfer of the threonylcarbamoyl moiety of threonylcarbamoyl-AMP (TC-AMP) to the N6 group of A37, together with TsaE and TsaB. TsaD likely plays a direct catalytic role in this reaction. This is tRNA N6-adenosine threonylcarbamoyltransferase from Pseudomonas aeruginosa (strain ATCC 15692 / DSM 22644 / CIP 104116 / JCM 14847 / LMG 12228 / 1C / PRS 101 / PAO1).